The primary structure comprises 71 residues: Small ribosomal subunit protein bS21 (71 aa).

It belongs to the bacterial ribosomal protein bS21 family.

This is Small ribosomal subunit protein bS21 from Psychromonas ingrahamii (strain DSM 17664 / CCUG 51855 / 37).